Reading from the N-terminus, the 143-residue chain is SsrA-binding protein (143 aa).

Belongs to the SmpB family.

It localises to the cytoplasm. Functionally, required for rescue of stalled ribosomes mediated by trans-translation. Binds to transfer-messenger RNA (tmRNA), required for stable association of tmRNA with ribosomes. tmRNA and SmpB together mimic tRNA shape, replacing the anticodon stem-loop with SmpB. tmRNA is encoded by the ssrA gene; the 2 termini fold to resemble tRNA(Ala) and it encodes a 'tag peptide', a short internal open reading frame. During trans-translation Ala-aminoacylated tmRNA acts like a tRNA, entering the A-site of stalled ribosomes, displacing the stalled mRNA. The ribosome then switches to translate the ORF on the tmRNA; the nascent peptide is terminated with the 'tag peptide' encoded by the tmRNA and targeted for degradation. The ribosome is freed to recommence translation, which seems to be the essential function of trans-translation. This is SsrA-binding protein from Mycoplasmoides gallisepticum (strain R(low / passage 15 / clone 2)) (Mycoplasma gallisepticum).